The primary structure comprises 210 residues: Protein GET1 (210 aa).

The Lumenal portion of the chain corresponds to 1 to 4; the sequence is MPSL. Residues 5 to 24 traverse the membrane as a helical segment; sequence LIIVLIIHVVTYLINTIGAN. Over 25–110 the chain is Cytoplasmic; that stretch reads TIDSLLWLLY…SFDLAVKSIR (86 aa). Positions 39–95 form a coiled coil; it reads NQTSQTANEQRRLKREVMQLKREMNATSSQDEFAKWAKLRRRHDKTMEEYEAKNKAL. A helical membrane pass occupies residues 111–131; sequence FFSTTGLKLFLQFWCSKTPIF. Residues 132 to 155 are Lumenal-facing; that stretch reads ELPRGWIPWQVEWVLSFPRAPLGT. A helical membrane pass occupies residues 156 to 172; it reads VSIQIWGGVCATVVSLA. The Cytoplasmic portion of the chain corresponds to 173–210; it reads GDAIGVVNVYLTSKAPKQKEPATSGENSARPMAIKKEL. Positions 189 to 210 are disordered; it reads KQKEPATSGENSARPMAIKKEL.

Belongs to the WRB/GET1 family. Interacts with GET3.

Its subcellular location is the endoplasmic reticulum membrane. In terms of biological role, required for the post-translational delivery of tail-anchored (TA) proteins to the endoplasmic reticulum. Acts as a membrane receptor for soluble GET3, which recognizes and selectively binds the transmembrane domain of TA proteins in the cytosol. The sequence is that of Protein GET1 from Coccidioides immitis (strain RS) (Valley fever fungus).